The sequence spans 193 residues: Adenylate kinase (193 aa).

Residue glycine 11 to threonine 16 coordinates ATP. An NMP region spans residues serine 31–valine 60. AMP contacts are provided by residues threonine 32, arginine 37, glutamate 58–valine 60, glycine 85–arginine 88, and glutamine 92. The segment at alanine 126–aspartate 136 is LID. Arginine 127 is a binding site for ATP. Arginine 133 and arginine 145 together coordinate AMP. Glutamine 173 is an ATP binding site.

It belongs to the adenylate kinase family. In terms of assembly, monomer.

It is found in the cytoplasm. The catalysed reaction is AMP + ATP = 2 ADP. It participates in purine metabolism; AMP biosynthesis via salvage pathway; AMP from ADP: step 1/1. Catalyzes the reversible transfer of the terminal phosphate group between ATP and AMP. Plays an important role in cellular energy homeostasis and in adenine nucleotide metabolism. The protein is Adenylate kinase of Synechococcus sp. (strain JA-2-3B'a(2-13)) (Cyanobacteria bacterium Yellowstone B-Prime).